The chain runs to 477 residues: Probable glycine dehydrogenase (decarboxylating) subunit 2 (477 aa).

Lysine 264 carries the N6-(pyridoxal phosphate)lysine modification.

The protein belongs to the GcvP family. C-terminal subunit subfamily. As to quaternary structure, the glycine cleavage system is composed of four proteins: P, T, L and H. In this organism, the P 'protein' is a heterodimer of two subunits. Requires pyridoxal 5'-phosphate as cofactor.

It carries out the reaction N(6)-[(R)-lipoyl]-L-lysyl-[glycine-cleavage complex H protein] + glycine + H(+) = N(6)-[(R)-S(8)-aminomethyldihydrolipoyl]-L-lysyl-[glycine-cleavage complex H protein] + CO2. Functionally, the glycine cleavage system catalyzes the degradation of glycine. The P protein binds the alpha-amino group of glycine through its pyridoxal phosphate cofactor; CO(2) is released and the remaining methylamine moiety is then transferred to the lipoamide cofactor of the H protein. This Fervidobacterium nodosum (strain ATCC 35602 / DSM 5306 / Rt17-B1) protein is Probable glycine dehydrogenase (decarboxylating) subunit 2.